A 229-amino-acid chain; its full sequence is Prolactin (229 aa).

The N-terminal stretch at 1–30 (MSNRGASLKGLFLAVLLVSNTLLTKEGVTS) is a signal peptide. Intrachain disulfides connect Cys-34–Cys-41, Cys-88–Cys-204, and Cys-221–Cys-229.

Belongs to the somatotropin/prolactin family.

Its subcellular location is the secreted. This is Prolactin (PRL) from Gallus gallus (Chicken).